Reading from the N-terminus, the 147-residue chain is Hemoglobin subunit gamma-2 (147 aa).

In terms of domain architecture, Globin spans 3 to 147 (HFTEEDKATI…VASALSSRYH (145 aa)). Residue threonine 13 is modified to Phosphothreonine. Phosphoserine is present on residues serine 45, serine 51, and serine 53. Position 60 is an N6-acetyllysine (lysine 60). Residue histidine 64 coordinates heme b. Lysine 83 is modified (N6-acetyllysine). Histidine 93 is a heme b binding site. Cysteine 94 is modified (S-nitrosocysteine). A phosphoserine mark is found at serine 140, serine 143, and serine 144.

It belongs to the globin family. As to quaternary structure, heterotetramer of two alpha chains and two gamma chains in fetal hemoglobin (Hb F). Red blood cells.

Gamma chains make up the fetal hemoglobin F, in combination with alpha chains. The protein is Hemoglobin subunit gamma-2 (HBG2) of Gorilla gorilla gorilla (Western lowland gorilla).